A 190-amino-acid polypeptide reads, in one-letter code: Threonylcarbamoyl-AMP synthase (190 aa).

A YrdC-like domain is found at 10–190 (PQDKESVYRH…DWHSRQVIRA (181 aa)).

The protein belongs to the SUA5 family. TsaC subfamily.

It is found in the cytoplasm. The enzyme catalyses L-threonine + hydrogencarbonate + ATP = L-threonylcarbamoyladenylate + diphosphate + H2O. Required for the formation of a threonylcarbamoyl group on adenosine at position 37 (t(6)A37) in tRNAs that read codons beginning with adenine. Catalyzes the conversion of L-threonine, HCO(3)(-)/CO(2) and ATP to give threonylcarbamoyl-AMP (TC-AMP) as the acyladenylate intermediate, with the release of diphosphate. In Dichelobacter nodosus (strain VCS1703A), this protein is Threonylcarbamoyl-AMP synthase.